The sequence spans 295 residues: Glycine--tRNA ligase alpha subunit (295 aa).

Belongs to the class-II aminoacyl-tRNA synthetase family. Tetramer of two alpha and two beta subunits.

It localises to the cytoplasm. The catalysed reaction is tRNA(Gly) + glycine + ATP = glycyl-tRNA(Gly) + AMP + diphosphate. In Shouchella clausii (strain KSM-K16) (Alkalihalobacillus clausii), this protein is Glycine--tRNA ligase alpha subunit.